A 2036-amino-acid polypeptide reads, in one-letter code: MDRNYPSAGFGDPLGAGAGWSYERSAKASLVYGSSRTSHPETDILHRQAYAAPHPLQSYATNHHPAGLSGLFDTGLHHAGSAGPDASVMNLISALESRGPQPGPSASSLLSQFRSPSWQTAMHTPGPTELFISGALPGSSTFPSSSALSAYQHPASFGSRPFPVPSSLSLQDPPFSPPANGLLSPHDVLHLKPSQAPTVPSSLGFERLAGGGVLGPAGLGPAQTPPYRPGPPDPPPPPRHLPTQFNLLASSSAAAAAAEQSSPQLYNFSGAAPGPPPPERALPRQDTVIKHYQRPASAQPPPPPPPAHALQHYLSCGGSYPSMGHRANLACSPLGGGEPSPGAGEPSKAGPSGATAGASGRATGPEAAGGGGAGGGGGGYRPIIQSPGYKTGKGGYGAAAGGATRPPPPRSTATPKCQSLGGPAAAYATGKASGAGGAGGQAYSPGQPQGLLGPQAYGQGFGGGQAQDLSKAPSYSGGPPQPPSGPPPPGLATCQSYSPDQLQGQLYGVQGEPYPGPAAHSQGLPTASPSLSYSTGHSPALSGHGGGWGPSSLGGGGEASPSHIIRPLQSPPATGRPPGVGSPGAPGKYLSSVLASAPFLAPPGAGSYAAGAGGYKGKGDGSELLAGPGGPPAERTEDEEFLIQHLLQAPSPPRTSGADGLVGEDGAADASKGLGGSGGAGGPPGTPYELAKEDPQRYHLQSVIRTSASLDEGATAALELGLGRLKEKKKGPERGGETPEGLATSVVHYGAGAKELGAFLQKSPPPPPPTAQSTQPTPHGLLLEAGGPDLPLVLPPPPPQLLPSVLSHAPSPSPSASKVGVHLLEPATRDGAPQPPPPPPPPPPPMPLQLEAHLRSHGLEPAAPSPRLRPEESLDPPGAMQELLGALEPLPPAPGDTGVGPPNSEGKDPAGAYRSPSPQGTKAPRFVPLTSICFPDSLLQDEERSFFPTMEEMFGGGAADDYGKAGPPEDEGDPKAGAGPPPGPPAYDPYGPYCPGRASGAGPETPGLGLDPNKPPELPSTVNAEPLGLIQSGPHQAAPPPPPPPPPPPAPASEPKGGLTSPIFCSTKPKKLLKTSSFHLLRRRDPPFQTPKKLYAQEYEFEADEDKADVPADIRLNPRRLPDLVSSCRSRPALSPLGDIDFCPPNPGPDGPRRRGRKPTKAKRDGPPRPRGRPRIRPLEVPTTAGPASASTPTDGAKKPRGRGRGRGRKAEEAGGTRLEPLKPLKIKLSVPKAGEGLGTSSGDAISGTDHNSLDSSLTREKIEAKIKEVEEKQPEMKSGFMASFLDFLKSGKRHPPLYQAGLTPPLSPPKSVPPSVPARGLQPQPPATPAVPHPPPSGAFGLGGALEAAESEGLGLGCPSPCKRLDEELKRNLETLPSFSSDEEDSVAKNRDLQESISSAISALDDPPLAGPKDTSTPDGPPLAPAAAVPGPPPLPGLPSANSNGTPEPPLLEEKPPPTPPPAPTPQPQPPPPPPPPQPALPSPPPLVAPTPSSPPPPPLPPPPPPAMPSPPPPPPPAAAPLAAPPEEPAAPSPEDPELPDTRPLHLAKKQETAAVCGETDEEAGESGGEGIFRERDEFVIRAEDIPSLKLALQTGREPPPIWRVQKALLQKFTPEIKDGQRQFCATSNYLGYFGDAKNRYQRLYVKFLENVNKKDYVRVCARKPWHRPPVPVRRSGQAKNPVSAGGSSAPPPKAPAPPPKPETPEKTTSEKPPEQTPETAMPEPPAPEKPSLLRPVEKEKEKEKVTRGERPLRGERATSGRQTRPERSLATGQPATSRLPKARPTKVKAEPPPKKRKKWLKEAGGNATAGGGPPGSSSDSESSPGAPSEDERAVPGRLLKTRAMREMYRSYVEMLVSTALDPDMIQALEDTHDELYLPPMRKIDGLLNEHKKKVLKRLSLSPALQDALHTFPQLQVEQSGEGSPEEGAVRLRPAGEPYNRKTLSKLKRSVVRAQEFKVELEKSGYYTLYHSLHHYKYHTFLRCRDQTLAIEGGAEDLGQEEVVQQCMRNQPWLEQLFDSFSDLLAQAQAHSRCG.

3 disordered regions span residues 210–283 (GGGV…RALP), 331–587 (CSPL…GAPG), and 649–697 (APSP…DPQR). The segment covering 223 to 240 (QTPPYRPGPPDPPPPPRH) has biased composition (pro residues). The span at 249 to 258 (ASSSAAAAAA) shows a compositional bias: low complexity. A phosphoserine mark is found at Ser332 and Ser340. Positions 340 to 365 (SPGAGEPSKAGPSGATAGASGRATGP) are enriched in low complexity. Composition is skewed to gly residues over residues 367–380 (AAGGGGAGGGGGGY) and 391–400 (TGKGGYGAAA). Low complexity-rich tracts occupy residues 411-432 (STATPKCQSLGGPAAAYATGKA) and 441-458 (QAYSPGQPQGLLGPQAYG). Positions 479 to 490 (PPQPPSGPPPPG) are enriched in pro residues. 2 stretches are compositionally biased toward polar residues: residues 493–504 (TCQSYSPDQLQG) and 523–537 (GLPTASPSLSYSTGH). The span at 543–558 (GHGGGWGPSSLGGGGE) shows a compositional bias: gly residues. Ser651 is subject to Phosphoserine. The segment covering 673-683 (GLGGSGGAGGP) has biased composition (gly residues). A Phosphothreonine modification is found at Thr738. Disordered regions lie at residues 758–850 (AFLQ…PLQL), 859–878 (LEPAAPSPRLRPEESLDPPG), 886–925 (ALEPLPPAPGDTGVGPPNSEGKDPAGAYRSPSPQGTKAPR), and 952–1068 (EMFG…CSTK). Positions 802–817 (LPSVLSHAPSPSPSAS) are enriched in low complexity. Residues 833 to 847 (PQPPPPPPPPPPPMP) are compositionally biased toward pro residues. Ser865 carries the phosphoserine modification. The span at 1037–1052 (AAPPPPPPPPPPPAPA) shows a compositional bias: pro residues. Residues Ser1077 and Ser1135 each carry the phosphoserine modification. 4 disordered regions span residues 1120–1260 (RLPD…SLTR), 1294–1347 (RHPP…GGAL), 1376–1573 (TLPS…GEGI), and 1668–1840 (HRPP…PGRL). Low complexity predominate over residues 1182–1194 (PTTAGPASASTPT). The segment covering 1199-1208 (KPRGRGRGRG) has biased composition (basic residues). Basic and acidic residues predominate over residues 1209 to 1223 (RKAEEAGGTRLEPLK). Lys1223 carries the post-translational modification N6-acetyllysine. Over residues 1239-1257 (GTSSGDAISGTDHNSLDSS) the composition is skewed to polar residues. Thr1304 is subject to Phosphothreonine. Pro residues-rich tracts occupy residues 1306 to 1317 (PLSPPKSVPPSV) and 1324 to 1338 (PQPPATPAVPHPPPS). The residue at position 1308 (Ser1308) is a Phosphoserine. Phosphoserine occurs at positions 1381, 1382, and 1387. 2 stretches are compositionally biased toward pro residues: residues 1420 to 1438 (DGPPLAPAAAVPGPPPLPG) and 1458 to 1535 (PPTP…APSP). Residues 1541 to 1553 (PDTRPLHLAKKQE) show a composition bias toward basic and acidic residues. Thr1561 is subject to Phosphothreonine. Ser1568 carries the post-translational modification Phosphoserine. The segment covering 1691-1703 (APPPKAPAPPPKP) has biased composition (pro residues). Basic and acidic residues-rich tracts occupy residues 1704-1715 (ETPEKTTSEKPP) and 1737-1769 (PVEKEKEKEKVTRGERPLRGERATSGRQTRPER). Thr1705 carries the post-translational modification Phosphothreonine. Residues 1817–1829 (GSSSDSESSPGAP) show a composition bias toward low complexity. Phosphoserine is present on Ser1925.

It localises to the nucleus. The protein localises to the postsynaptic density. Its subcellular location is the synapse. It is found in the synaptosome. This Homo sapiens (Human) protein is Proline-rich protein 12.